The chain runs to 78 residues: Large ribosomal subunit protein bL28 (78 aa).

This sequence belongs to the bacterial ribosomal protein bL28 family.

The sequence is that of Large ribosomal subunit protein bL28 from Colwellia psychrerythraea (strain 34H / ATCC BAA-681) (Vibrio psychroerythus).